Here is a 247-residue protein sequence, read N- to C-terminus: MTFSILSIFVFGLISSSVALGPAPVLLGKAENFAILSETGVSNVPDSSVNCDIGVSPIGASGVTGFSLTGDSGGSFSTSKQVTGRVYASTYGDPTPASLTTAVFDMENAYKDAQERIDPDFTNLHTGALGGAILVPGLYKFTTGVSITADLVLTGGPTDTYIFQIAGTLSLAAGVKINLVGGLLPANVVWAVADSVTVAATSSFQGILLGKTQVVVNTNASVEGRILAQTAVVLQKATVIVPGVCGA.

A signal peptide spans 1–19 (MTFSILSIFVFGLISSSVA). Asparagine 219 carries an N-linked (GlcNAc...) asparagine glycan.

Belongs to the ice-binding protein family.

The protein resides in the secreted. Binds ice crystals and most probably inhibits their growth in order to prevent cell damage from extracellular ice. This Flammulina populicola (Enokitake mushroom) protein is Ice-binding protein.